The chain runs to 165 residues: S-ribosylhomocysteine lyase (165 aa).

The Fe cation site is built by His54, His58, and Cys128.

This sequence belongs to the LuxS family. In terms of assembly, homodimer. Fe cation serves as cofactor.

The catalysed reaction is S-(5-deoxy-D-ribos-5-yl)-L-homocysteine = (S)-4,5-dihydroxypentane-2,3-dione + L-homocysteine. Functionally, involved in the synthesis of autoinducer 2 (AI-2) which is secreted by bacteria and is used to communicate both the cell density and the metabolic potential of the environment. The regulation of gene expression in response to changes in cell density is called quorum sensing. Catalyzes the transformation of S-ribosylhomocysteine (RHC) to homocysteine (HC) and 4,5-dihydroxy-2,3-pentadione (DPD). The chain is S-ribosylhomocysteine lyase from Helicobacter hepaticus (strain ATCC 51449 / 3B1).